Consider the following 550-residue polypeptide: Chaperonin GroEL (550 aa).

ATP-binding positions include 30-33, lysine 51, 87-91, glycine 415, 479-481, and aspartate 495; these read TLGP, DGTTT, and NAA. Positions 526–550 are disordered; sequence KDEKSDLGNSSAPSAGGMGGMGGMM. Over residues 541 to 550 the composition is skewed to gly residues; that stretch reads GGMGGMGGMM.

Belongs to the chaperonin (HSP60) family. As to quaternary structure, forms a cylinder of 14 subunits composed of two heptameric rings stacked back-to-back. Interacts with the co-chaperonin GroES.

Its subcellular location is the cytoplasm. It carries out the reaction ATP + H2O + a folded polypeptide = ADP + phosphate + an unfolded polypeptide.. In terms of biological role, together with its co-chaperonin GroES, plays an essential role in assisting protein folding. The GroEL-GroES system forms a nano-cage that allows encapsulation of the non-native substrate proteins and provides a physical environment optimized to promote and accelerate protein folding. The chain is Chaperonin GroEL from Buchnera aphidicola subsp. Baizongia pistaciae (strain Bp).